The chain runs to 316 residues: Annexin D7 (316 aa).

At Ala2 the chain carries N-acetylalanine. Annexin repeat units lie at residues 11–82 (PLPE…LWTF), 83–154 (EPAE…PLVS), 166–237 (TLAR…AVIK), and 241–312 (YPEK…ALLG). Phe24, Gly26, Gly28, and Glu68 together coordinate Ca(2+). Ser95 is subject to Phosphoserine. Phosphothreonine is present on residues Thr100 and Thr112. Tyr129 is subject to Phosphotyrosine. Residues Ile254 and Gly258 each contribute to the Ca(2+) site. Tyr283 bears the Phosphotyrosine mark. A Phosphoserine modification is found at Ser288. Ca(2+) contacts are provided by Asp298, Thr299, and Glu304.

This sequence belongs to the annexin (TC 1.A.31.1) family. As to expression, expressed in flowers.

In Arabidopsis thaliana (Mouse-ear cress), this protein is Annexin D7 (ANNAT7).